A 728-amino-acid polypeptide reads, in one-letter code: Homoaconitase, mitochondrial (728 aa).

The transit peptide at 1–24 directs the protein to the mitochondrion; sequence MVAIPRLARLSVPAWALSARGRFY. [4Fe-4S] cluster is bound by residues Cys362, Cys422, and Cys425.

Belongs to the aconitase/IPM isomerase family. [4Fe-4S] cluster is required as a cofactor.

Its subcellular location is the mitochondrion. The enzyme catalyses (2R,3S)-homoisocitrate = cis-homoaconitate + H2O. It participates in amino-acid biosynthesis; L-lysine biosynthesis via AAA pathway; L-alpha-aminoadipate from 2-oxoglutarate: step 3/5. Catalyzes the reversible hydration of cis-homoaconitate to (2R,3S)-homoisocitrate, a step in the alpha-aminoadipate pathway for lysine biosynthesis. The polypeptide is Homoaconitase, mitochondrial (LYS4) (Cryptococcus neoformans var. neoformans serotype D (strain B-3501A) (Filobasidiella neoformans)).